The sequence spans 352 residues: Ribosomal RNA large subunit methyltransferase M (352 aa).

S-adenosyl-L-methionine is bound by residues Ser187, 218–221 (APGG), Asp237, Asp257, and Asp273. Lys302 acts as the Proton acceptor in catalysis.

Belongs to the class I-like SAM-binding methyltransferase superfamily. RNA methyltransferase RlmE family. RlmM subfamily. In terms of assembly, monomer.

The protein resides in the cytoplasm. It carries out the reaction cytidine(2498) in 23S rRNA + S-adenosyl-L-methionine = 2'-O-methylcytidine(2498) in 23S rRNA + S-adenosyl-L-homocysteine + H(+). In terms of biological role, catalyzes the 2'-O-methylation at nucleotide C2498 in 23S rRNA. The protein is Ribosomal RNA large subunit methyltransferase M of Methylococcus capsulatus (strain ATCC 33009 / NCIMB 11132 / Bath).